The sequence spans 213 residues: Large ribosomal subunit protein uL3 (213 aa).

It belongs to the universal ribosomal protein uL3 family. As to quaternary structure, part of the 50S ribosomal subunit. Forms a cluster with proteins L14 and L19.

Functionally, one of the primary rRNA binding proteins, it binds directly near the 3'-end of the 23S rRNA, where it nucleates assembly of the 50S subunit. The chain is Large ribosomal subunit protein uL3 from Bifidobacterium longum (strain DJO10A).